Consider the following 80-residue polypeptide: MSLEILEQLEAKVQMAVDTIALLQMEVEELKETNAELTQNLEQANNGRSEVEQEAQKARDEQASFEARIRGLLGKMEEVE.

A coiled-coil region spans residues 3 to 80 (LEILEQLEAK…GLLGKMEEVE (78 aa)). The disordered stretch occupies residues 41–62 (LEQANNGRSEVEQEAQKARDEQ). Positions 49–62 (SEVEQEAQKARDEQ) are enriched in basic and acidic residues.

It belongs to the ZapB family. As to quaternary structure, homodimer. The ends of the coiled-coil dimer bind to each other, forming polymers. Interacts with FtsZ.

Its subcellular location is the cytoplasm. In terms of biological role, non-essential, abundant cell division factor that is required for proper Z-ring formation. It is recruited early to the divisome by direct interaction with FtsZ, stimulating Z-ring assembly and thereby promoting cell division earlier in the cell cycle. Its recruitment to the Z-ring requires functional FtsA or ZipA. The chain is Cell division protein ZapB from Aliivibrio salmonicida (strain LFI1238) (Vibrio salmonicida (strain LFI1238)).